Here is a 103-residue protein sequence, read N- to C-terminus: Large ribosomal subunit protein bL21 (103 aa).

Belongs to the bacterial ribosomal protein bL21 family. In terms of assembly, part of the 50S ribosomal subunit. Contacts protein L20.

This protein binds to 23S rRNA in the presence of protein L20. This is Large ribosomal subunit protein bL21 from Maridesulfovibrio salexigens (strain ATCC 14822 / DSM 2638 / NCIMB 8403 / VKM B-1763) (Desulfovibrio salexigens).